The primary structure comprises 359 residues: MATH domain and coiled-coil domain-containing protein At2g42475 (359 aa).

Residues 6–128 (KTSFTFEIEN…NDKLIITVEV (123 aa)) enclose the MATH domain. Residues 146–337 (EFKELQDLYN…NLELMVLDFK (192 aa)) adopt a coiled-coil conformation.

This is MATH domain and coiled-coil domain-containing protein At2g42475 from Arabidopsis thaliana (Mouse-ear cress).